The following is a 122-amino-acid chain: Large ribosomal subunit protein uL14 (122 aa).

The protein belongs to the universal ribosomal protein uL14 family. As to quaternary structure, part of the 50S ribosomal subunit. Forms a cluster with proteins L3 and L19. In the 70S ribosome, L14 and L19 interact and together make contacts with the 16S rRNA in bridges B5 and B8. Interacts with ribosomal silencing factor RsfS, which may inhibit ribosomal subunit association.

Its function is as follows. Binds to 23S rRNA. Forms part of two intersubunit bridges in the 70S ribosome. This is Large ribosomal subunit protein uL14 from Treponema pallidum (strain Nichols).